The sequence spans 273 residues: Putative phosphoenolpyruvate synthase regulatory protein (273 aa).

G153–T160 is a binding site for ADP.

Belongs to the pyruvate, phosphate/water dikinase regulatory protein family. PSRP subfamily.

It catalyses the reaction [pyruvate, water dikinase] + ADP = [pyruvate, water dikinase]-phosphate + AMP + H(+). It carries out the reaction [pyruvate, water dikinase]-phosphate + phosphate + H(+) = [pyruvate, water dikinase] + diphosphate. Its function is as follows. Bifunctional serine/threonine kinase and phosphorylase involved in the regulation of the phosphoenolpyruvate synthase (PEPS) by catalyzing its phosphorylation/dephosphorylation. The chain is Putative phosphoenolpyruvate synthase regulatory protein from Leptothrix cholodnii (strain ATCC 51168 / LMG 8142 / SP-6) (Leptothrix discophora (strain SP-6)).